The chain runs to 136 residues: Protein LpdD (136 aa).

Belongs to the CinA family.

Its function is as follows. Probably involved in tannin degradation, however the precise biochemical function in metabolism of gallate is unknown. This chain is Protein LpdD, found in Lactiplantibacillus plantarum (strain ATCC BAA-793 / NCIMB 8826 / WCFS1) (Lactobacillus plantarum).